A 369-amino-acid chain; its full sequence is Phospho-N-acetylmuramoyl-pentapeptide-transferase (369 aa).

Transmembrane regions (helical) follow at residues A3 to I23, G53 to W73, V81 to L101, W118 to L138, F162 to V182, L198 to F218, P240 to W260, I267 to L287, T290 to L310, and F347 to I367.

It belongs to the glycosyltransferase 4 family. MraY subfamily. It depends on Mg(2+) as a cofactor.

The protein localises to the cell membrane. It carries out the reaction UDP-N-acetyl-alpha-D-muramoyl-L-alanyl-gamma-D-glutamyl-meso-2,6-diaminopimeloyl-D-alanyl-D-alanine + di-trans,octa-cis-undecaprenyl phosphate = di-trans,octa-cis-undecaprenyl diphospho-N-acetyl-alpha-D-muramoyl-L-alanyl-D-glutamyl-meso-2,6-diaminopimeloyl-D-alanyl-D-alanine + UMP. The protein operates within cell wall biogenesis; peptidoglycan biosynthesis. Its function is as follows. Catalyzes the initial step of the lipid cycle reactions in the biosynthesis of the cell wall peptidoglycan: transfers peptidoglycan precursor phospho-MurNAc-pentapeptide from UDP-MurNAc-pentapeptide onto the lipid carrier undecaprenyl phosphate, yielding undecaprenyl-pyrophosphoryl-MurNAc-pentapeptide, known as lipid I. The polypeptide is Phospho-N-acetylmuramoyl-pentapeptide-transferase (Clavibacter michiganensis subsp. michiganensis (strain NCPPB 382)).